The following is a 349-amino-acid chain: MHDRFLRACRREPTDVTPVWFMRQAGRYMAEYRELRKKYTLLEICKTPELALEVTLQPLRLGMDAAILFADILLPLEPMGAPFEFAKGEGPVIHEPVRDRAGIERLRVFEPEEGLGYVLDAVRLIRKELDGKTPLIGFAGAPFTMASYLVEGGKSSDYRLTKQLMWSDPEAWSALMGKISEVVRRLLRAQVAAGAQAVQLFDSWVGSLSIDDYREHVQPHVRYILRDLEATGVPVIHFGTNTGALLEAQRDAGGTVIGVDWRTPLDKAWQRVGYDRAVQGNLDPLLLCAPRAVAERRARAVLEEAGGRAGHIFNLGHGIIPETPVDTVKAVIDLVHSIPRASLQGEPDR.

Residues Arg-23–Arg-27, Asp-71, Tyr-148, Ser-203, and His-317 each bind substrate.

It belongs to the uroporphyrinogen decarboxylase family. Homodimer.

It is found in the cytoplasm. It carries out the reaction uroporphyrinogen III + 4 H(+) = coproporphyrinogen III + 4 CO2. It participates in porphyrin-containing compound metabolism; protoporphyrin-IX biosynthesis; coproporphyrinogen-III from 5-aminolevulinate: step 4/4. Catalyzes the decarboxylation of four acetate groups of uroporphyrinogen-III to yield coproporphyrinogen-III. The protein is Uroporphyrinogen decarboxylase of Sorangium cellulosum (strain So ce56) (Polyangium cellulosum (strain So ce56)).